The following is a 133-amino-acid chain: ATP synthase epsilon chain, chloroplastic (133 aa).

It belongs to the ATPase epsilon chain family. As to quaternary structure, F-type ATPases have 2 components, CF(1) - the catalytic core - and CF(0) - the membrane proton channel. CF(1) has five subunits: alpha(3), beta(3), gamma(1), delta(1), epsilon(1). CF(0) has three main subunits: a, b and c.

The protein localises to the plastid. Its subcellular location is the chloroplast thylakoid membrane. In terms of biological role, produces ATP from ADP in the presence of a proton gradient across the membrane. The sequence is that of ATP synthase epsilon chain, chloroplastic from Solanum lycopersicum (Tomato).